A 216-amino-acid chain; its full sequence is NADH-quinone oxidoreductase subunit C (216 aa).

This sequence belongs to the complex I 30 kDa subunit family. NDH-1 is composed of 14 different subunits. Subunits NuoB, C, D, E, F, and G constitute the peripheral sector of the complex.

The protein resides in the cell inner membrane. It carries out the reaction a quinone + NADH + 5 H(+)(in) = a quinol + NAD(+) + 4 H(+)(out). Its function is as follows. NDH-1 shuttles electrons from NADH, via FMN and iron-sulfur (Fe-S) centers, to quinones in the respiratory chain. The immediate electron acceptor for the enzyme in this species is believed to be ubiquinone. Couples the redox reaction to proton translocation (for every two electrons transferred, four hydrogen ions are translocated across the cytoplasmic membrane), and thus conserves the redox energy in a proton gradient. The polypeptide is NADH-quinone oxidoreductase subunit C (Francisella tularensis subsp. holarctica (strain FTNF002-00 / FTA)).